We begin with the raw amino-acid sequence, 126 residues long: Small ribosomal subunit protein uS8 (126 aa).

It belongs to the universal ribosomal protein uS8 family. In terms of assembly, part of the 30S ribosomal subunit. Contacts proteins S5 and S12.

In terms of biological role, one of the primary rRNA binding proteins, it binds directly to 16S rRNA central domain where it helps coordinate assembly of the platform of the 30S subunit. The chain is Small ribosomal subunit protein uS8 from Desulfovibrio desulfuricans (strain ATCC 27774 / DSM 6949 / MB).